We begin with the raw amino-acid sequence, 470 residues long: 1-aminocyclopropane-1-carboxylate synthase 9 (470 aa).

Positions 47 and 85 each coordinate substrate. Lysine 272 carries the N6-(pyridoxal phosphate)lysine modification.

Belongs to the class-I pyridoxal-phosphate-dependent aminotransferase family. As to quaternary structure, homodimer and heterodimer. In vivo, the relevance of heterodimerization with other ACS enzymes is however unsure. Interacts (via its C-terminal region) with FEI1, FEI2, ETO1 and EOL1. Pyridoxal 5'-phosphate is required as a cofactor. May be processed at its C-terminus. As to expression, expressed in roots and siliques.

The catalysed reaction is S-adenosyl-L-methionine = 1-aminocyclopropane-1-carboxylate + S-methyl-5'-thioadenosine + H(+). It functions in the pathway alkene biosynthesis; ethylene biosynthesis via S-adenosyl-L-methionine; ethylene from S-adenosyl-L-methionine: step 1/2. In terms of biological role, 1-aminocyclopropane-1-carboxylate synthase (ACS) enzymes catalyze the conversion of S-adenosyl-L-methionine (SAM) into 1-aminocyclopropane-1-carboxylate (ACC), a direct precursor of ethylene. In Arabidopsis thaliana (Mouse-ear cress), this protein is 1-aminocyclopropane-1-carboxylate synthase 9 (ACS9).